Reading from the N-terminus, the 342-residue chain is Ribosomal RNA small subunit methyltransferase C (342 aa).

The protein belongs to the methyltransferase superfamily. RsmC family. As to quaternary structure, monomer.

The protein resides in the cytoplasm. It catalyses the reaction guanosine(1207) in 16S rRNA + S-adenosyl-L-methionine = N(2)-methylguanosine(1207) in 16S rRNA + S-adenosyl-L-homocysteine + H(+). Functionally, specifically methylates the guanine in position 1207 of 16S rRNA in the 30S particle. This chain is Ribosomal RNA small subunit methyltransferase C, found in Erwinia tasmaniensis (strain DSM 17950 / CFBP 7177 / CIP 109463 / NCPPB 4357 / Et1/99).